The primary structure comprises 220 residues: Homeobox-leucine zipper protein ATHB-21 (220 aa).

The tract at residues 26 to 48 (VPQQGGEAKPTRRRKRKSKSVVV) is disordered. Positions 58 to 117 (GWFRKRKLSDEQVRMLEISFEDDHKLESERKDRLASELGLDPRQVAVWFQNRRARWKNKR) form a DNA-binding region, homeobox. The segment at 118–146 (VEDEYTKLKNAYETTVVEKCRLDSEVIHL) is leucine-zipper.

It belongs to the HD-ZIP homeobox family. Class I subfamily. Widely expressed.

Its subcellular location is the nucleus. Probable transcription factor. The polypeptide is Homeobox-leucine zipper protein ATHB-21 (ATHB-21) (Arabidopsis thaliana (Mouse-ear cress)).